The chain runs to 65 residues: Alpha-toxin Bot1 (65 aa).

The LCN-type CS-alpha/beta domain occupies 2 to 64 (RDAYIAQPEN…VPIRIPGKCH (63 aa)). Cystine bridges form between C12-C63, C16-C36, C22-C46, and C26-C48. Residue F65 is modified to Phenylalanine amide.

Belongs to the long (4 C-C) scorpion toxin superfamily. Sodium channel inhibitor family. Alpha subfamily. Expressed by the venom gland.

It localises to the secreted. Functionally, alpha toxins bind voltage-independently at site-3 of sodium channels (Nav) and inhibit the inactivation of the activated channels, thereby blocking neuronal transmission. This chain is Alpha-toxin Bot1, found in Buthus occitanus tunetanus (Common European scorpion).